We begin with the raw amino-acid sequence, 174 residues long: ATP synthase subunit delta (174 aa).

The protein belongs to the ATPase delta chain family. F-type ATPases have 2 components, F(1) - the catalytic core - and F(0) - the membrane proton channel. F(1) has five subunits: alpha(3), beta(3), gamma(1), delta(1), epsilon(1). F(0) has three main subunits: a(1), b(2) and c(10-14). The alpha and beta chains form an alternating ring which encloses part of the gamma chain. F(1) is attached to F(0) by a central stalk formed by the gamma and epsilon chains, while a peripheral stalk is formed by the delta and b chains.

It localises to the cell inner membrane. F(1)F(0) ATP synthase produces ATP from ADP in the presence of a proton or sodium gradient. F-type ATPases consist of two structural domains, F(1) containing the extramembraneous catalytic core and F(0) containing the membrane proton channel, linked together by a central stalk and a peripheral stalk. During catalysis, ATP synthesis in the catalytic domain of F(1) is coupled via a rotary mechanism of the central stalk subunits to proton translocation. Functionally, this protein is part of the stalk that links CF(0) to CF(1). It either transmits conformational changes from CF(0) to CF(1) or is implicated in proton conduction. This chain is ATP synthase subunit delta, found in Francisella philomiragia subsp. philomiragia (strain ATCC 25017 / CCUG 19701 / FSC 153 / O#319-036).